The sequence spans 419 residues: MLGILTFILVFGIIVVVHEFGHFYFAKKSGILVREFAIGMGPKIFAHIGKDGTAYTIRILPLGGYVRMAGWGDDTTEIKTGTPVSLTLADDGKVKRINLSGKKLDQTALPMQVTQFDFEDKLFIKGLVLEEEKTFAVDHDATVVEADGTEVRIAPLDVQYQNATIWGKLITNFAGPMNNFILGVVVFWVLIFMQGGVRDVDTNQFHIMPQGALAKVGVPETAQITKIGSHEVSNWESLIQAVETETKDKTAPTLDVTISEKGSDKQVTVTPEDSQGRYLLGVQPGVKSDFLSMFVGGFTTAADSALRILSALKNLIFQPDLNKLGGPVAIFKASSDAAKNGIENILYFLAMISINIGIFNLIPIPALDGGKIVLNILEAIRRKPLKQEIETYVTLAGVVIMVVLMIAVTWNDIMRLFFR.

Histidine 18 contacts Zn(2+). Glutamate 19 is an active-site residue. Residue histidine 22 coordinates Zn(2+). 3 helical membrane-spanning segments follow: residues 169–191 (LITN…WVLI), 345–367 (ILYF…IPAL), and 388–410 (EIET…AVTW).

Belongs to the peptidase M50B family. Requires Zn(2+) as cofactor.

Its subcellular location is the cell membrane. The sequence is that of Putative zinc metalloprotease spr0242 from Streptococcus pneumoniae (strain ATCC BAA-255 / R6).